The chain runs to 475 residues: Ribulose bisphosphate carboxylase large chain (475 aa).

The propeptide occupies 1-2 (MS). Pro3 is subject to N-acetylproline. At Lys14 the chain carries N6,N6,N6-trimethyllysine. Substrate-binding residues include Asn123 and Thr173. Lys175 serves as the catalytic Proton acceptor. Lys177 provides a ligand contact to substrate. Mg(2+) is bound by residues Lys201, Asp203, and Glu204. Residue Lys201 is modified to N6-carboxylysine. His294 serves as the catalytic Proton acceptor. Substrate contacts are provided by Arg295, His327, and Ser379.

This sequence belongs to the RuBisCO large chain family. Type I subfamily. In terms of assembly, heterohexadecamer of 8 large chains and 8 small chains; disulfide-linked. The disulfide link is formed within the large subunit homodimers. Mg(2+) is required as a cofactor. In terms of processing, the disulfide bond which can form in the large chain dimeric partners within the hexadecamer appears to be associated with oxidative stress and protein turnover.

Its subcellular location is the plastid. It is found in the chloroplast. It catalyses the reaction 2 (2R)-3-phosphoglycerate + 2 H(+) = D-ribulose 1,5-bisphosphate + CO2 + H2O. The enzyme catalyses D-ribulose 1,5-bisphosphate + O2 = 2-phosphoglycolate + (2R)-3-phosphoglycerate + 2 H(+). Its function is as follows. RuBisCO catalyzes two reactions: the carboxylation of D-ribulose 1,5-bisphosphate, the primary event in carbon dioxide fixation, as well as the oxidative fragmentation of the pentose substrate in the photorespiration process. Both reactions occur simultaneously and in competition at the same active site. This Keteleeria davidiana (David's keteleeria) protein is Ribulose bisphosphate carboxylase large chain.